We begin with the raw amino-acid sequence, 279 residues long: Dehydrogenase/reductase SDR family member 4 (279 aa).

Leu37–Val61 is a binding site for NADP(+). Position 93 is an N6-acetyllysine; alternate (Lys93). Lys93 is subject to N6-succinyllysine; alternate. The residue at position 106 (Lys106) is an N6-acetyllysine. Ser170 contributes to the substrate binding site. Tyr183 acts as the Proton acceptor in catalysis. Lys187 contributes to the NADP(+) binding site. The residue at position 217 (Lys217) is an N6-acetyllysine; alternate. Lys217 carries the N6-succinyllysine; alternate modification. Ser221 bears the Phosphoserine mark. An N6-succinyllysine mark is found at Lys228 and Lys235. Residues Ser277 to Leu279 carry the Peroxisomal targeting signal motif.

The protein belongs to the short-chain dehydrogenases/reductases (SDR) family. In terms of assembly, homotetramer.

The protein localises to the peroxisome. It catalyses the reaction a secondary alcohol + NADP(+) = a ketone + NADPH + H(+). It carries out the reaction 3alpha-hydroxy-5beta-pregnan-20-one + NADP(+) = 5beta-pregnan-3,20-dione + NADPH + H(+). The enzyme catalyses 5beta-dihydrotestosterone + NADPH + H(+) = 5beta-androstane-3alpha,17beta-diol + NADP(+). The catalysed reaction is all-trans-retinol + NADP(+) = all-trans-retinal + NADPH + H(+). It catalyses the reaction isatin + NADPH + H(+) = 3-hydroxyindolin-2-one + NADP(+). NADPH-dependent oxidoreductase which catalyzes the reduction of a variety of compounds bearing carbonyl groups including ketosteroids, alpha-dicarbonyl compounds, aldehydes, aromatic ketones and quinones. Reduces all-trans-retinal and 9-cis retinal. Reduces 3-ketosteroids and benzil into 3alpha-hydroxysteroids and S-benzoin, respectively, in contrast to the stereoselectivity of primates DHRS4s which produce 3beta-hydroxysteroids and R-benzoin. In the reverse reaction, catalyzes the NADP-dependent oxidation of 3alpha-hydroxysteroids and alcohol, but with much lower efficiency. Involved in the metabolism of 3alpha-hydroxysteroids, retinoid, isatin and xenobiotic carbonyl compounds. In Mus musculus (Mouse), this protein is Dehydrogenase/reductase SDR family member 4.